Here is a 277-residue protein sequence, read N- to C-terminus: 2-dehydro-3-deoxyphosphooctonate aldolase (277 aa).

It belongs to the KdsA family.

The protein localises to the cytoplasm. The enzyme catalyses D-arabinose 5-phosphate + phosphoenolpyruvate + H2O = 3-deoxy-alpha-D-manno-2-octulosonate-8-phosphate + phosphate. It participates in carbohydrate biosynthesis; 3-deoxy-D-manno-octulosonate biosynthesis; 3-deoxy-D-manno-octulosonate from D-ribulose 5-phosphate: step 2/3. Its pathway is bacterial outer membrane biogenesis; lipopolysaccharide biosynthesis. The chain is 2-dehydro-3-deoxyphosphooctonate aldolase from Brucella canis (strain ATCC 23365 / NCTC 10854 / RM-666).